The chain runs to 140 residues: Small ribosomal subunit protein bS6 (140 aa).

A disordered region spans residues 111–140 (EHFTGPAGAEGSDDESTESTDEAVAETADA). Over residues 121–140 (GSDDESTESTDEAVAETADA) the composition is skewed to acidic residues.

It belongs to the bacterial ribosomal protein bS6 family.

Functionally, binds together with bS18 to 16S ribosomal RNA. The polypeptide is Small ribosomal subunit protein bS6 (Rhodopirellula baltica (strain DSM 10527 / NCIMB 13988 / SH1)).